Reading from the N-terminus, the 799-residue chain is Protein translocase subunit SecA 1 (799 aa).

Residues Gln85, 103–107 (GEGKT), and Asp504 each bind ATP.

It belongs to the SecA family. Monomer and homodimer. Part of the essential Sec protein translocation apparatus which comprises SecA, SecYEG and auxiliary proteins SecDF. Other proteins may also be involved.

It is found in the cell membrane. The protein localises to the cytoplasm. It catalyses the reaction ATP + H2O + cellular proteinSide 1 = ADP + phosphate + cellular proteinSide 2.. Functionally, part of the Sec protein translocase complex. Interacts with the SecYEG preprotein conducting channel. Has a central role in coupling the hydrolysis of ATP to the transfer of proteins into and across the cell membrane, serving as an ATP-driven molecular motor driving the stepwise translocation of polypeptide chains across the membrane. This Lactobacillus johnsonii (strain CNCM I-12250 / La1 / NCC 533) protein is Protein translocase subunit SecA 1.